A 477-amino-acid polypeptide reads, in one-letter code: Protein translocase subunit SecY (477 aa).

A run of 10 helical transmembrane segments spans residues 28–48 (FMISFLITVVLLVLFRVLAII), 67–89 (FFSLFNLLGGGGLNQLSLFAVGI), 130–150 (IITLPFALVQSFAVIQIATNS), 165–185 (DFVAFYIIAMTAGTYLSVFLG), 196–216 (GITLLILSGILAQLPEGFIAA), 234–254 (AISFFIYFMAFVTLLFATTFI), 286–306 (SAGVIPVIFASSIMSIPVTIA), 329–349 (GIVLYGILVILFSFFYSYIQI), 387–407 (FIGAPFLTVIAIIPYIVSALI), and 413–433 (LSLGGTGIIIIVTAVVEFMSA).

Belongs to the SecY/SEC61-alpha family. In terms of assembly, component of the Sec protein translocase complex. Heterotrimer consisting of SecY, SecE and SecG subunits. The heterotrimers can form oligomers, although 1 heterotrimer is thought to be able to translocate proteins. Interacts with the ribosome. Interacts with SecDF, and other proteins may be involved. Interacts with SecA.

It localises to the cell membrane. In terms of biological role, the central subunit of the protein translocation channel SecYEG. Consists of two halves formed by TMs 1-5 and 6-10. These two domains form a lateral gate at the front which open onto the bilayer between TMs 2 and 7, and are clamped together by SecE at the back. The channel is closed by both a pore ring composed of hydrophobic SecY resides and a short helix (helix 2A) on the extracellular side of the membrane which forms a plug. The plug probably moves laterally to allow the channel to open. The ring and the pore may move independently. In Mycoplasma pneumoniae (strain ATCC 29342 / M129 / Subtype 1) (Mycoplasmoides pneumoniae), this protein is Protein translocase subunit SecY.